The chain runs to 500 residues: UDP-GalNAc:beta-1,3-N-acetylgalactosaminyltransferase 2 (500 aa).

The Cytoplasmic segment spans residues 1-6 (MRNWLV). Residues 7–23 (LLCPCVLGAALHLWLRL) form a helical; Signal-anchor for type II membrane protein membrane-spanning segment. Over 24–500 (RSPPPACASG…CGDPCRCQAR (477 aa)) the chain is Lumenal. N-linked (GlcNAc...) asparagine glycans are attached at residues asparagine 116 and asparagine 174.

This sequence belongs to the glycosyltransferase 31 family. In terms of processing, N-glycosylated. In terms of tissue distribution, expressed in all tissues examined, but at highest levels in testis, adipose tissue, skeletal muscle and ovary.

The protein resides in the golgi apparatus membrane. It is found in the endoplasmic reticulum. It catalyses the reaction 3-O-(N-acetyl-beta-D-glucosaminyl-(1-&gt;4)-alpha-D-mannosyl)-L-threonyl-[protein] + UDP-N-acetyl-alpha-D-galactosamine = 3-O-[beta-D-GalNAc-(1-&gt;3)-beta-D-GlcNAc-(1-&gt;4)-alpha-D-Man]-L-Thr-[protein] + UDP + H(+). Its pathway is protein modification; protein glycosylation. In terms of biological role, beta-1,3-N-acetylgalactosaminyltransferase that synthesizes a unique carbohydrate structure, GalNAc-beta-1-3GlcNAc, on N- and O-glycans. Has no galactose nor galactosaminyl transferase activity toward any acceptor substrate. Involved in alpha-dystroglycan (DAG1) glycosylation: acts coordinately with GTDC2/POMGnT2 to synthesize a GalNAc-beta3-GlcNAc-beta-terminus at the 4-position of protein O-mannose in the biosynthesis of the phosphorylated O-mannosyl trisaccharide (N-acetylgalactosamine-beta-3-N-acetylglucosamine-beta-4-(phosphate-6-)mannose), a carbohydrate structure present in alpha-dystroglycan, which is required for binding laminin G-like domain-containing extracellular proteins with high affinity. This chain is UDP-GalNAc:beta-1,3-N-acetylgalactosaminyltransferase 2 (B3GALNT2), found in Homo sapiens (Human).